Here is a 350-residue protein sequence, read N- to C-terminus: UDP-N-acetylenolpyruvoylglucosamine reductase (350 aa).

The 172-residue stretch at His24–Leu195 folds into the FAD-binding PCMH-type domain. Residue Arg172 is part of the active site. Ser245 functions as the Proton donor in the catalytic mechanism. Residue Glu342 is part of the active site.

Belongs to the MurB family. Requires FAD as cofactor.

Its subcellular location is the cytoplasm. It carries out the reaction UDP-N-acetyl-alpha-D-muramate + NADP(+) = UDP-N-acetyl-3-O-(1-carboxyvinyl)-alpha-D-glucosamine + NADPH + H(+). The protein operates within cell wall biogenesis; peptidoglycan biosynthesis. Cell wall formation. This chain is UDP-N-acetylenolpyruvoylglucosamine reductase, found in Xanthomonas euvesicatoria pv. vesicatoria (strain 85-10) (Xanthomonas campestris pv. vesicatoria).